We begin with the raw amino-acid sequence, 920 residues long: 2-oxoadipate dehydrogenase complex component E1 (920 aa).

Residues Lys183 and Lys188 each carry the N6-succinyllysine modification. The interval 299-318 is disordered; the sequence is GKTRGRQQSQEDGDYSPNGS. Residues Lys800 and Lys818 each carry the N6-succinyllysine modification.

The protein belongs to the alpha-ketoglutarate dehydrogenase family. As to quaternary structure, the 2-oxoadipate dehydrogenase complex is composed of OADH (2-oxoadipate dehydrogenase; E1a), DLST (dihydrolipoamide succinyltransferase; E2) and DLD (dihydrolipoamide dehydrogenase; E3). E1a functional unit is a dimer. Requires thiamine diphosphate as cofactor.

The protein localises to the mitochondrion. The catalysed reaction is N(6)-[(R)-lipoyl]-L-lysyl-[protein] + 2-oxoadipate + H(+) = N(6)-[(R)-S(8)-glutaryldihydrolipoyl]-L-lysyl-[protein] + CO2. It functions in the pathway amino-acid degradation. Functionally, 2-oxoadipate dehydrogenase (E1a) component of the 2-oxoadipate dehydrogenase complex (OADHC). Participates in the first step, rate limiting for the overall conversion of 2-oxoadipate (alpha-ketoadipate) to glutaryl-CoA and CO(2) catalyzed by the whole OADHC. Catalyzes the irreversible decarboxylation of 2-oxoadipate via the thiamine diphosphate (ThDP) cofactor and subsequent transfer of the decarboxylated acyl intermediate on an oxidized dihydrolipoyl group that is covalently amidated to the E2 enzyme (dihydrolipoyllysine-residue succinyltransferase or DLST). Can catalyze the decarboxylation of 2-oxoglutarate in vitro, but at a much lower rate than 2-oxoadipate. Responsible for the last step of L-lysine, L-hydroxylysine and L-tryptophan catabolism with the common product being 2-oxoadipate. The polypeptide is 2-oxoadipate dehydrogenase complex component E1 (Dhtkd1) (Rattus norvegicus (Rat)).